The chain runs to 438 residues: tRNA(Ile)-lysidine synthase (438 aa).

Residue 26–31 coordinates ATP; it reads SGGADS.

This sequence belongs to the tRNA(Ile)-lysidine synthase family.

It localises to the cytoplasm. It carries out the reaction cytidine(34) in tRNA(Ile2) + L-lysine + ATP = lysidine(34) in tRNA(Ile2) + AMP + diphosphate + H(+). Functionally, ligates lysine onto the cytidine present at position 34 of the AUA codon-specific tRNA(Ile) that contains the anticodon CAU, in an ATP-dependent manner. Cytidine is converted to lysidine, thus changing the amino acid specificity of the tRNA from methionine to isoleucine. In Parabacteroides distasonis (strain ATCC 8503 / DSM 20701 / CIP 104284 / JCM 5825 / NCTC 11152), this protein is tRNA(Ile)-lysidine synthase.